Here is a 1336-residue protein sequence, read N- to C-terminus: SH3 domain and tetratricopeptide repeat-containing protein 1 (1336 aa).

An N-acetylmethionine modification is found at methionine 1. Disordered regions lie at residues 1–76 and 225–266; these read MENL…PPCQ and TGPR…SEEV. A compositionally biased stretch (gly residues) spans 18–27; the sequence is GPVGPSGGGS. The segment covering 46–61 has biased composition (basic and acidic residues); it reads AGPEEAKAPVRGDEAP. 2 stretches are compositionally biased toward low complexity: residues 62–74 and 247–266; these read PARV…GTPP and EAAP…SEEV. The SH3 domain maps to 305–368; the sequence is MAVGLASALA…RSSLISMQGP (64 aa). TPR repeat units lie at residues 560 to 593, 601 to 634, 665 to 698, 786 to 819, 863 to 896, 946 to 979, 1027 to 1063, and 1192 to 1225; these read ARLC…LEGS, VAVY…LLGT, ARAC…HRDS, GPLY…SAIA, GVIA…ARDL, THVL…AVEM, GQLL…FIDL, and RVAY…CNSP. Tyrosine 1248 bears the Phosphotyrosine mark. One copy of the TPR 9 repeat lies at 1277 to 1311; the sequence is LKIYTRLATIYHNFLLDREKSLFFYQKARTFATEL.

The chain is SH3 domain and tetratricopeptide repeat-containing protein 1 (SH3TC1) from Homo sapiens (Human).